A 118-amino-acid polypeptide reads, in one-letter code: V-type proton ATPase subunit G 2 (118 aa).

The interval 23 to 90 (ADARKRKARR…VQGMQSSQQR (68 aa)) is disordered. The span at 35–55 (QAKEEAQMEVEQYRREREQEF) shows a compositional bias: basic and acidic residues. 2 stretches are compositionally biased toward polar residues: residues 56–69 (QSKQ…QGNL) and 78–89 (RRQVQGMQSSQQ).

It belongs to the V-ATPase G subunit family. As to quaternary structure, V-ATPase is a heteromultimeric enzyme made up of two complexes: the ATP-hydrolytic V1 complex and the proton translocation V0 complex. The V1 complex consists of three catalytic AB heterodimers that form a heterohexamer, three peripheral stalks each consisting of EG heterodimers, one central rotor including subunits D and F, and the regulatory subunits C and H. The proton translocation complex V0 consists of the proton transport subunit a, a ring of proteolipid subunits c9c'', rotary subunit d, subunits e and f, and the accessory subunits ATP6AP1/Ac45 and ATP6AP2/PRR.

It is found in the melanosome. The protein localises to the cytoplasmic vesicle. Its subcellular location is the clathrin-coated vesicle membrane. In terms of biological role, subunit of the V1 complex of vacuolar(H+)-ATPase (V-ATPase), a multisubunit enzyme composed of a peripheral complex (V1) that hydrolyzes ATP and a membrane integral complex (V0) that translocates protons. V-ATPase is responsible for acidifying and maintaining the pH of intracellular compartments and in some cell types, is targeted to the plasma membrane, where it is responsible for acidifying the extracellular environment. This is V-type proton ATPase subunit G 2 (ATP6V1G2) from Macaca mulatta (Rhesus macaque).